The following is a 117-amino-acid chain: Large ribosomal subunit protein uL18 (117 aa).

This sequence belongs to the universal ribosomal protein uL18 family. As to quaternary structure, part of the 50S ribosomal subunit; part of the 5S rRNA/L5/L18/L25 subcomplex. Contacts the 5S and 23S rRNAs.

In terms of biological role, this is one of the proteins that bind and probably mediate the attachment of the 5S RNA into the large ribosomal subunit, where it forms part of the central protuberance. This chain is Large ribosomal subunit protein uL18, found in Aliivibrio salmonicida (strain LFI1238) (Vibrio salmonicida (strain LFI1238)).